A 205-amino-acid polypeptide reads, in one-letter code: Pectinesterase inhibitor 3 (205 aa).

An N-terminal signal peptide occupies residues 1–25; it reads MAPTQNLFLVAIAFAVIFTASTVHG. 2 cysteine pairs are disulfide-bonded: C38/C47 and C104/C156.

Belongs to the PMEI family. As to expression, expressed in apical meristem.

It is found in the secreted. Its subcellular location is the extracellular space. The protein localises to the apoplast. Pectin methylesterase (PME) inhibitor that can target PMEs (e.g. PME2 and PME3) in a pH-dependent manner, mainly in slightly acidic conditions (pH 6.3 and 5.0) but not at pH 7.5; this processus relies on changes in the protonation of amino acids involved in intermolecular and intramolecular interactions. Regulates de-methylesterification of pectins in the apical meristem and affects primordia formation and phyllotactic patterning. The sequence is that of Pectinesterase inhibitor 3 from Arabidopsis thaliana (Mouse-ear cress).